Here is a 95-residue protein sequence, read N- to C-terminus: U6 snRNA-associated Sm-like protein LSm2 (95 aa).

The Sm domain maps to 2 to 76 (LFYSFFKSLV…VRYVQLPADE (75 aa)). A Phosphothreonine modification is found at Thr79.

It belongs to the snRNP Sm proteins family. Component of the precatalytic spliceosome (spliceosome B complex). Component of the U4/U6-U5 tri-snRNP complex, a building block of the precatalytic spliceosome (spliceosome B complex). The U4/U6-U5 tri-snRNP complex is composed of the U4, U6 and U5 snRNAs and at least PRPF3, PRPF4, PRPF6, PRPF8, PRPF31, SNRNP200, TXNL4A, SNRNP40, SNRPB, SNRPD1, SNRPD2, SNRPD3, SNRPE, SNRPF, SNRPG, DDX23, CD2BP2, PPIH, SNU13, EFTUD2, SART1 and USP39, plus LSM2, LSM3, LSM4, LSM5, LSM6, LSM7 and LSM8. LSM2, LSM3, LSM4, LSM5, LSM6, LSM7 and LSM8 form a heptameric, ring-shaped subcomplex (the LSM2-8 complex) that is part of the U4/U6-U5 tri-snRNP complex and the precatalytic spliceosome.

The protein resides in the nucleus. Functionally, plays a role in pre-mRNA splicing as component of the U4/U6-U5 tri-snRNP complex that is involved in spliceosome assembly, and as component of the precatalytic spliceosome (spliceosome B complex). The heptameric LSM2-8 complex binds specifically to the 3'-terminal U-tract of U6 snRNA. The protein is U6 snRNA-associated Sm-like protein LSm2 (LSM2) of Homo sapiens (Human).